We begin with the raw amino-acid sequence, 531 residues long: Tyrosine 2,3-aminomutase (531 aa).

The active-site Proton donor/acceptor is Tyr-51. His-81 is a binding site for substrate. The segment at residues 140–142 (ASG) is a cross-link (5-imidazolinone (Ala-Gly)). Ser-141 carries the post-translational modification 2,3-didehydroalanine (Ser). Substrate is bound by residues Asn-193 and Arg-298.

Belongs to the TAL/TAM family. Homotetramer; dimer of dimers. Post-translationally, contains an active site 4-methylidene-imidazol-5-one (MIO), which is formed autocatalytically by cyclization and dehydration of residues Ala-Ser-Gly.

It catalyses the reaction L-tyrosine = 3-amino-3-(4-hydroxyphenyl)propanoate. The catalysed reaction is L-tyrosine = (E)-4-coumarate + NH4(+). In terms of biological role, has aminomutase and, to a lesser extent, ammonia-lyase activity. Primarily, catalyzes the rearrangement of L-tyrosine to R-beta-tyrosine, which is incorporated into secondary metabolites called chondramides. The aminomutase activity mainly produces R-beta-tyrosine but also S-beta tyrosine in smaller amounts. Does not accept D-tyrosine, L-histidine or L-phenylalanine as substrates. This chain is Tyrosine 2,3-aminomutase, found in Chondromyces crocatus.